A 315-amino-acid chain; its full sequence is MTNDFHHITVLLHETVDMLDIKPDGIYVDATLGGAGHSEYLLSQLGPDGHLYAFDQDQKAIDNAHIRLKKYVDTGQVTFIKDNFRNLSSNLKALGVSEINGICYDLGVSSPQLDERERGFSYKQDAPLDMRMNREQSLTAYDVVNTYSYHDLVRIFFKYGEDKFSKQIARKIEQVRAEKPISTTTELAEIIKSSKSAKELKKKGHPAKQIFQAIRIEVNDELGAADESIQQAMDLLAVDGRISVITFHSLEDRLTKQLFKEASTVEVPKGLPFIPDDLQPKMELVNRKPILPSQEELEANNRAHSAKLRVARRIR.

Residues 35–37 (AGH), Asp-55, Phe-84, Asp-105, and Gln-112 contribute to the S-adenosyl-L-methionine site.

The protein belongs to the methyltransferase superfamily. RsmH family.

The protein resides in the cytoplasm. It carries out the reaction cytidine(1402) in 16S rRNA + S-adenosyl-L-methionine = N(4)-methylcytidine(1402) in 16S rRNA + S-adenosyl-L-homocysteine + H(+). In terms of biological role, specifically methylates the N4 position of cytidine in position 1402 (C1402) of 16S rRNA. The chain is Ribosomal RNA small subunit methyltransferase H from Streptococcus agalactiae serotype III (strain NEM316).